Consider the following 255-residue polypeptide: 5-oxoprolinase subunit A (255 aa).

It belongs to the LamB/PxpA family. As to quaternary structure, forms a complex composed of PxpA, PxpB and PxpC.

It carries out the reaction 5-oxo-L-proline + ATP + 2 H2O = L-glutamate + ADP + phosphate + H(+). Catalyzes the cleavage of 5-oxoproline to form L-glutamate coupled to the hydrolysis of ATP to ADP and inorganic phosphate. The polypeptide is 5-oxoprolinase subunit A (Pyrococcus horikoshii (strain ATCC 700860 / DSM 12428 / JCM 9974 / NBRC 100139 / OT-3)).